The sequence spans 230 residues: Large ribosomal subunit protein uL1 (230 aa).

This sequence belongs to the universal ribosomal protein uL1 family. As to quaternary structure, part of the 50S ribosomal subunit.

Functionally, binds directly to 23S rRNA. The L1 stalk is quite mobile in the ribosome, and is involved in E site tRNA release. Its function is as follows. Protein L1 is also a translational repressor protein, it controls the translation of the L11 operon by binding to its mRNA. The sequence is that of Large ribosomal subunit protein uL1 from Thermoanaerobacter sp. (strain X514).